Consider the following 473-residue polypeptide: MRHKRSAKRTKRASATQLYKTCKQAGTCPPDIIPKVEGKTIAEQILQYGSMGVFFGGLGIGTGSGTGGRTGYIPLGTRPPTATDTLAPVRPPLTVDPVGPSDPSIVSLVEETSFIDAGAPTSVPSIPPDVSGFSITTSTDTTPAILDINNTVTTVTTHNNPTFTDPSVLQPPTPAETGGHFTLSSSTISTHNYEEIPMDTFIVSTNPNTVTSSTPIPGSRPVARLGLYSRTTQQVKVVDPAFVTTPTKLITYDNPAYEGIDVDNTLYFSSNDNSINIAPDPDFLDIVALHRPALTSRRTGIRYSRIGNKQTLRTRSGKSIGAKVHYYYDLSTIDPAEEIELQTITPSTYTTTSHAASPTSINNGLYDIYADDFITDTSTTPVPSVPSTSLSGYIPANTTIPFGGAYNIPLVSGPDIPINITDQAPSLIPIVPGSPQYTIIADAGDFYLHPSYYMLRKRRKRLPYFFSDVSLAA.

Residues 1 to 13 (MRHKRSAKRTKRA) carry the Nuclear localization signal motif. The cysteines at positions 22 and 28 are disulfide-linked. A Nuclear localization signal motif is present at residues 454–462 (MLRKRRKRL).

It belongs to the papillomaviridae L2 protein family. As to quaternary structure, interacts with major capsid protein L1. Interacts with E2; this interaction inhibits E2 transcriptional activity but not the DNA replication function E2. Interacts with host GADD45GIP1. Interacts with host HSPA8; this interaction is required for L2 nuclear translocation. Interacts with host importins KPNB2 and KPNB3. Forms a complex with importin alpha2-beta1 heterodimers via interaction with the importin alpha2 adapter. Interacts with host DYNLT1; this interaction is essential for virus intracellular transport during entry. Interacts (via C-terminus) with host retromer subunits VPS35 and VPS29. Highly phosphorylated.

The protein resides in the virion. The protein localises to the host nucleus. Its subcellular location is the host early endosome. It is found in the host Golgi apparatus. In terms of biological role, minor protein of the capsid that localizes along the inner surface of the virion, within the central cavities beneath the L1 pentamers. Plays a role in capsid stabilization through interaction with the major capsid protein L1. Once the virion enters the host cell, L2 escorts the genomic DNA into the nucleus by promoting escape from the endosomal compartments and traffic through the host Golgi network. Mechanistically, the C-terminus of L2 possesses a cell-penetrating peptide that protudes from the host endosome, interacts with host cytoplasmic retromer cargo and thereby mediates the capsid delivery to the host trans-Golgi network. Plays a role through its interaction with host dynein in the intracellular microtubule-dependent transport of viral capsid toward the nucleus. Mediates the viral genome import into the nucleus through binding to host importins. Once within the nucleus, L2 localizes viral genomes to host PML bodies in order to activate early gene expression for establishment of infection. Later on, promotes late gene expression by interacting with the viral E2 protein and by inhibiting its transcriptional activation functions. During virion assembly, encapsidates the genome by direct interaction with the viral DNA. The sequence is that of Minor capsid protein L2 from Human papillomavirus type 16.